An 827-amino-acid chain; its full sequence is Leucine--tRNA ligase (827 aa).

The short motif at 42 to 52 is the 'HIGH' region element; sequence PYPSGNLHMGH. Residues 583-587 carry the 'KMSKS' region motif; that stretch reads KMSKS. Position 586 (Lys586) interacts with ATP.

This sequence belongs to the class-I aminoacyl-tRNA synthetase family.

Its subcellular location is the cytoplasm. The catalysed reaction is tRNA(Leu) + L-leucine + ATP = L-leucyl-tRNA(Leu) + AMP + diphosphate. In Desulfitobacterium hafniense (strain DSM 10664 / DCB-2), this protein is Leucine--tRNA ligase.